We begin with the raw amino-acid sequence, 408 residues long: Glyceraldehyde-3-phosphate dehydrogenase, testis-specific (408 aa).

Positions 1–73 are testis-specific N-terminal extension; it reads MSKRDIVLTN…TPPPKMVSVA (73 aa). The interval 19-68 is disordered; sequence QPCPVTRAPPPPEPKAEVEPQPQPEPTPVREEIKPPPPPLPPHPATPPPK. Over residues 53 to 68 the composition is skewed to pro residues; that stretch reads PPPPPLPPHPATPPPK. NAD(+)-binding positions include 85-86, Asp106, Lys151, Tyr173, and Ser193; that span reads RI. Residues 223–225, Thr254, 283–284, and Arg306 each bind D-glyceraldehyde 3-phosphate; these read SCT and TG. Catalysis depends on Cys224, which acts as the Nucleophile. Asn388 lines the NAD(+) pocket.

Belongs to the glyceraldehyde-3-phosphate dehydrogenase family. In terms of assembly, homotetramer. Interacts with ARRB2; the interaction is detected in the nucleus upon OR1D2 stimulation. In terms of tissue distribution, testis specific.

It localises to the cytoplasm. It catalyses the reaction D-glyceraldehyde 3-phosphate + phosphate + NAD(+) = (2R)-3-phospho-glyceroyl phosphate + NADH + H(+). Its pathway is carbohydrate degradation; glycolysis; pyruvate from D-glyceraldehyde 3-phosphate: step 1/5. In terms of biological role, may play an important role in regulating the switch between different pathways for energy production during spermiogenesis and in the spermatozoon. Required for sperm motility and male fertility. The sequence is that of Glyceraldehyde-3-phosphate dehydrogenase, testis-specific (GAPDHS) from Homo sapiens (Human).